The sequence spans 554 residues: MRIAASTVLFGAASAASFQQQAQHVLSGGFGKAQEAMKPISDAFTDAAGRPFESFEDAFSGMTAETKALWEEIKLLVPDSAFKDLSWLSKPKPHHRRDDWNHVVKGADVQGMWVQDANGKSHRQVDGRLEEYNLRVKAVDPSKLNVDSVKQYSGYLDDEANDKHLFYWFFESRNDPKNDPVILWLNGGPGCSSLTGLFLELGPSSIDKTLKVVNNDFSWNNNASVIFLDQPVNVGYSYSGSSVSNTVAAGKDVYALLTLFFHQFPEYAKQDFHIAGESYAGHYIPVFASEILAHKNRNINLKSVLIGNGLTDGLTQYEHYRPMACGEGGYPAVLGEAECRSMDNALPRCQSLINNCYESGSVWSCVPASIYCNNAMIGPYQRTGRNVYDIRGPCEDSSNLCYSGLGYISDYLNQQSVMDALGVEVSSYDSCNFDINRNFLFQGDWMQPFHRLVPKILEEIPVLIYAGDADYICNWLGNRAWTEALEWPGKKDFNAAKVKDLKLSGAEKEYGKVKASGNFTFMQVYQAGHMVPMDQPENSLDFLNRWLNGEWFAK.

The signal sequence occupies residues 1 to 17; the sequence is MRIAASTVLFGAASAAS. The propeptide occupies 18–137; it reads FQQQAQHVLS…RLEEYNLRVK (120 aa). 5 cysteine pairs are disulfide-bonded: Cys-191-Cys-431, Cys-325-Cys-339, Cys-349-Cys-372, Cys-356-Cys-365, and Cys-394-Cys-401. N-linked (GlcNAc...) asparagine glycosylation occurs at Asn-222. Residue Ser-278 is part of the active site. Asp-470 is a catalytic residue. N-linked (GlcNAc...) asparagine glycosylation is present at Asn-518. His-529 is a catalytic residue.

It belongs to the peptidase S10 family.

It localises to the vacuole. It catalyses the reaction Release of a C-terminal amino acid with broad specificity.. Its function is as follows. Vacuolar carboxypeptidase involved in degradation of small peptides. Digests preferentially peptides containing an aliphatic or hydrophobic residue in P1' position, as well as methionine, leucine or phenylalanine in P1 position of ester substrate. This Chaetomium globosum (strain ATCC 6205 / CBS 148.51 / DSM 1962 / NBRC 6347 / NRRL 1970) (Soil fungus) protein is Carboxypeptidase Y homolog A (CPYA).